The following is a 123-amino-acid chain: Large ribosomal subunit protein uL29 (123 aa).

At lysine 19 the chain carries N6-acetyllysine. Residue lysine 25 forms a Glycyl lysine isopeptide (Lys-Gly) (interchain with G-Cter in SUMO2) linkage. At serine 29 the chain carries Phosphoserine. Lysine 43 is subject to N6-acetyllysine.

The protein belongs to the universal ribosomal protein uL29 family. In terms of assembly, component of the large ribosomal subunit.

It is found in the cytoplasm. Its function is as follows. Component of the large ribosomal subunit. The ribosome is a large ribonucleoprotein complex responsible for the synthesis of proteins in the cell. This chain is Large ribosomal subunit protein uL29 (RPL35), found in Sus scrofa (Pig).